The sequence spans 501 residues: L-arabinose isomerase (501 aa).

Residues Glu306, Glu333, His350, and His450 each coordinate Mn(2+).

The protein belongs to the arabinose isomerase family. In terms of assembly, homohexamer. Mn(2+) serves as cofactor.

It catalyses the reaction beta-L-arabinopyranose = L-ribulose. Its pathway is carbohydrate degradation; L-arabinose degradation via L-ribulose; D-xylulose 5-phosphate from L-arabinose (bacterial route): step 1/3. In terms of biological role, catalyzes the conversion of L-arabinose to L-ribulose. This Pectobacterium carotovorum subsp. carotovorum (strain PC1) protein is L-arabinose isomerase.